A 362-amino-acid polypeptide reads, in one-letter code: G-protein coupled receptor homolog US27 (362 aa).

Residues 1–34 (MTTSTNNQTLTQVSNMTNHTLNSTEIYQLFEYTR) lie on the Virion surface side of the membrane. Residues asparagine 7, asparagine 15, asparagine 18, and asparagine 22 are each glycosylated (N-linked (GlcNAc...) asparagine; by host). The helical transmembrane segment at 35 to 58 (LGVWLMCIVGTFLNVLVITTILYY) threads the bilayer. At 59–67 (RRKKKSPSD) the chain is on the intravirion side. The chain crosses the membrane as a helical span at residues 68–90 (TYICNLAVADLLIVVGLPFFLEY). At 91 to 104 (AKHHPKLSREVVCS) the chain is on the virion surface side. A helical membrane pass occupies residues 105–126 (GLNACFYICLFAGVCFLINLSM). The Intravirion portion of the chain corresponds to 127–148 (DRYCVIVWGVELNRVRNNKRAT). Residues 149-167 (CWVVIFWILAVLMGMPHYL) form a helical membrane-spanning segment. At 168–193 (MYSHTNNECVGEFANETSGWFPVFLN) the chain is on the virion surface side. A helical transmembrane segment spans residues 194 to 213 (TKVNICGYLAPIALMAYTYN). Residues 214 to 233 (RMVRFIINYVGKWHMQTLHV) lie on the Intravirion side of the membrane. A helical membrane pass occupies residues 234 to 257 (LLVVVVSFASFWFPFNLALFLESI). At 258 to 274 (RLLAGVYNDTLQNVIIF) the chain is on the virion surface side. A helical transmembrane segment spans residues 275-298 (CLYVGQFLAYVRACLNPGIYILVG). The Intravirion segment spans residues 299 to 362 (TQMRKDMWTT…MESGEEEFLL (64 aa)). The interval 341–362 (TKRTHYDRKNAPMESGEEEFLL) is disordered.

Belongs to the G-protein coupled receptor 1 family. Heterodimer with US28. Interacts with host Gi alpha-1 subunit GNAI1; this interaction does not lead to the catalytic activation of Gi complex.

The protein resides in the virion. The protein localises to the host cell membrane. Its function is as follows. Interacts with the host Gi complex without activating it, thereby probably interfering with the chemokine-Gi signaling. May also function as a G protein sink to sequester G protein from the cell surface via internalization. Plays an important role in spread of HCMV via the extracellular route. The chain is G-protein coupled receptor homolog US27 (US27) from Homo sapiens (Human).